The sequence spans 1507 residues: Nonribosomal peptide synthetase ataP (1507 aa).

Positions Met-1–Tyr-72 constitute a Carrier 1 domain. Ser-33 is modified (O-(pantetheine 4'-phosphoryl)serine). A disordered region spans residues Thr-98–Thr-119. Low complexity predominate over residues Gly-105 to Thr-115. Positions Thr-163–Leu-429 are condensation 1. Positions Ala-514–Arg-893 are adenylation. Residues Asn-988–Gln-1065 enclose the Carrier 2 domain. An O-(pantetheine 4'-phosphoryl)serine modification is found at Ser-1025. The segment at Thr-1099–Asn-1471 is condensation 2.

Belongs to the NRP synthetase family.

It functions in the pathway mycotoxin biosynthesis. Its function is as follows. Nonribosomal peptide synthetase; part of the gene cluster that mediates the biosynthesis of acetylaranotin, a member of the epipolythiodioxopiperazine (ETP) class of toxins characterized by a disulfide-bridged cyclic dipeptide. The first step of acetylaranotin biosynthesis is performed by the NRPS ataP which produces diketopiperazine cyclo-L-Phe-L-Phe via the condensation of 2 phenylalanines (L-Phe). The ataC domain of ataTC then catalyzes the formation of bishydroxylation of cyclo-L-Phe-L-Phe. The glutathione S-transferase domain ataG in ataIMG further catalyzes the conjugation of two glutathiones to the bishydroxylated intermediate. Next, the dipeptidase ataJ removes the Glu residues. The following step is performed by the carbon sulfur lyase domain ataI of ataIMG which may convert the bis-cysteinyl adduct to yield an epidithiol intermediate. The ataT domain from ataTC then catalyzes the oxidation of the free dithiols, followed by a cyclization step catalyzed by the cytochrome P450 ataF. AtaF probably acts as an epoxidase to promote a dual epoxidation formation at C8 and C9 along with C8' and C9', followed by the spontaneous nucleophilic attack of the amide nitrogens N10 and N10' to yield an intermediate with the pyrrolidine partial structure. The final steps of acetylaranotin biosynthesis involve the acetylation and ring rearrangement of an epitetrathiodiketopiperazine intermediate to produce acetylaranotin. AtaH probably catalyzes the acetylation of epitetrathiodiketopiperazine to produce a diacetate and ataY is responsible for the formation of the dihydrooxepin moiety that converts the diacetate intermediate to acetylaranotin via acetylapoaranotin. Both enzymes could function independently in the absence of the other. The acetylaranotin bis-thiomethyltransferase ataS located outside of acetylaranotin gene cluster is the main thiomethyltransferase responsible for converting acetylaranotin and its related intermediates to their methylated forms. The protein is Nonribosomal peptide synthetase ataP of Aspergillus terreus (strain NIH 2624 / FGSC A1156).